The sequence spans 435 residues: Putative FBD-associated F-box protein At5g56820 (435 aa).

Residues serine 14 to aspartate 60 enclose the F-box domain. The 50-residue stretch at valine 341 to arginine 390 folds into the FBD domain.

The polypeptide is Putative FBD-associated F-box protein At5g56820 (Arabidopsis thaliana (Mouse-ear cress)).